Consider the following 153-residue polypeptide: ORM1-like protein 1 (153 aa).

Over 1 to 26 (MNVGVAHSEVNPNTRVMNSRGMWLTY) the chain is Cytoplasmic. The next 2 membrane-spanning stretches (helical) occupy residues 27–46 (ALGV…FSVP) and 47–67 (VAWT…LHAV). The Cytoplasmic portion of the chain corresponds to 68 to 100 (KGTPFETPDQGKARLLTHWEQLDYGVQFTSSRK). Residues 101–121 (FLTISPIILYFLASFYTKYDP) form a helical membrane-spanning segment. The Extracellular portion of the chain corresponds to 122 to 123 (TH). The chain crosses the membrane as a helical span at residues 124–144 (FFINTASLLSVLIPKLPQLHG). The Cytoplasmic portion of the chain corresponds to 145 to 153 (VRIFGINKY).

Belongs to the ORM family. In terms of assembly, ceramide-sensitive subunit of the serine palmitoyltransferase (SPT) complex, which is also composed of SPTLC1, SPTLC2/3 and SPTSSA/B.

It is found in the endoplasmic reticulum membrane. In terms of biological role, plays an essential role in the homeostatic regulation of sphingolipid de novo biosynthesis by modulating the activity of the serine palmitoyltransferase (SPT) in response to ceramide levels. When complexed to SPT, the binding of ceramides to its N-terminus stabilizes a conformation that block SPT substrate entry, hence preventing SPT catalytic activity. Through this mechanism, maintains ceramide levels at sufficient concentrations for the production of complex sphingolipids, but which prevents the accumulation of ceramides to levels that trigger apoptosis. The polypeptide is ORM1-like protein 1 (ormdl1) (Xenopus laevis (African clawed frog)).